Reading from the N-terminus, the 589-residue chain is Netrin-G2 (589 aa).

An N-terminal signal peptide occupies residues 1–17 (MLRLLALFLHCLPLVSG). 3 disulfide bridges follow: cysteine 22/cysteine 39, cysteine 61/cysteine 81, and cysteine 69/cysteine 77. One can recognise a Laminin N-terminal domain in the interval 35–286 (EFYACQPKVM…AISNIEVIGR (252 aa)). Positions 69-88 (CSHENPYLCSNECDASNPDL) are NGL discriminant loop I. N-linked (GlcNAc...) asparagine glycosylation is found at asparagine 122 and asparagine 128. Cysteine 171 and cysteine 195 are joined by a disulfide. An NGL discriminant loop II region spans residues 201-203 (RWA). Positions 264–267 (TYVQ) are NGL discriminant loop III. 15 disulfide bridges follow: cysteine 287–cysteine 296, cysteine 289–cysteine 305, cysteine 307–cysteine 316, cysteine 319–cysteine 344, cysteine 413–cysteine 422, cysteine 415–cysteine 433, cysteine 436–cysteine 445, cysteine 448–cysteine 466, cysteine 469–cysteine 481, cysteine 471–cysteine 487, cysteine 489–cysteine 498, cysteine 501–cysteine 511, cysteine 516–cysteine 529, cysteine 523–cysteine 535, and cysteine 537–cysteine 546. 3 consecutive Laminin EGF-like domains span residues 287-346 (CKCN…ACAA), 413-468 (CECY…VCIE), and 469-513 (CNCN…GCYP). N-linked (GlcNAc...) asparagine glycosylation is present at asparagine 310. Asparagine 455 carries N-linked (GlcNAc...) asparagine glycosylation. The N-linked (GlcNAc...) asparagine glycan is linked to asparagine 482. Glycine 566 carries GPI-anchor amidated glycine lipidation. Residues 567 to 589 (IVPRPDTLLGCLLLLGLAARLAC) constitute a propeptide, removed in mature form.

In terms of assembly, interacts with LRRC4. Post-translationally, N-glycosylated. In terms of tissue distribution, expression is restricted primarily to neurons of the CNS, particularly in the cerebral cortex, habenular nucleus and superior colliculus. Low levels in lung, kidney, heart and spleen.

It is found in the cell membrane. Involved in controlling patterning and neuronal circuit formation at the laminar, cellular, subcellular and synaptic levels. Promotes neurite outgrowth of both axons and dendrites. The chain is Netrin-G2 (Ntng2) from Mus musculus (Mouse).